The primary structure comprises 446 residues: Argininosuccinate synthase (446 aa).

ATP contacts are provided by residues 17 to 25 (AFSGGLDTS) and A43. Y99 contacts L-citrulline. Positions 129 and 131 each coordinate ATP. T131, N135, and D136 together coordinate L-aspartate. Position 135 (N135) interacts with L-citrulline. An ATP-binding site is contributed by D136. R139 and S192 together coordinate L-citrulline. ATP is bound at residue D194. L-citrulline contacts are provided by T201, E203, and E280.

The protein belongs to the argininosuccinate synthase family. Type 2 subfamily. In terms of assembly, homotetramer.

It is found in the cytoplasm. The enzyme catalyses L-citrulline + L-aspartate + ATP = 2-(N(omega)-L-arginino)succinate + AMP + diphosphate + H(+). Its pathway is amino-acid biosynthesis; L-arginine biosynthesis; L-arginine from L-ornithine and carbamoyl phosphate: step 2/3. The chain is Argininosuccinate synthase from Burkholderia thailandensis (strain ATCC 700388 / DSM 13276 / CCUG 48851 / CIP 106301 / E264).